The chain runs to 201 residues: uncharacterized protein (201 aa).

Helical transmembrane passes span 9–29 (YNVF…ILVA), 42–62 (FLFV…FFDV), 86–106 (SGVI…VVMV), and 126–146 (LPYL…SIGM). Composition is skewed to basic and acidic residues over residues 165-174 (EPTDPNKTDN) and 182-191 (DENKKNEKEQ). Positions 165–201 (EPTDPNKTDNRAVVINLDENKKNEKEQSPPSAEMTSL) are disordered. Polar residues predominate over residues 192-201 (SPPSAEMTSL).

It localises to the cell membrane. This is an uncharacterized protein from Mycoplasma genitalium (strain ATCC 33530 / DSM 19775 / NCTC 10195 / G37) (Mycoplasmoides genitalium).